Here is a 634-residue protein sequence, read N- to C-terminus: Heat shock 70-related protein 1, mitochondrial (634 aa).

A mitochondrion-targeting transit peptide spans 1-20; the sequence is MFARRVCGSAAASAACLARH. A coiled-coil region spans residues 538 to 614; the sequence is SEQHAEADRV…AAATDKLQKA (77 aa).

It belongs to the heat shock protein 70 family.

Its subcellular location is the mitochondrion. This chain is Heat shock 70-related protein 1, mitochondrial (HSP70.1), found in Leishmania major.